The following is a 144-amino-acid chain: Large ribosomal subunit protein uL11 (144 aa).

Belongs to the universal ribosomal protein uL11 family. As to quaternary structure, part of the ribosomal stalk of the 50S ribosomal subunit. Interacts with L10 and the large rRNA to form the base of the stalk. L10 forms an elongated spine to which L12 dimers bind in a sequential fashion forming a multimeric L10(L12)X complex. Post-translationally, one or more lysine residues are methylated.

Forms part of the ribosomal stalk which helps the ribosome interact with GTP-bound translation factors. This Neisseria gonorrhoeae (strain ATCC 700825 / FA 1090) protein is Large ribosomal subunit protein uL11.